A 370-amino-acid chain; its full sequence is MATYKLLLLPGDGIGPEVMAEVKRLVGWLDAQGIAKFETEEGLVGGASYDADKVSITDATMAKALAADAVLFGAVGGPKWDSVPYEVRPEAGLLRLRKDLALYANLRPAICYPALAESSSLKPEVVEGLDIMIVRELTGGVYFGEPKTVTDLGNGQKRAVDTQVYDTYEIERIARVAFDLARKRRNKLTSMEKRNVMKTGVLWHEVVTQVHQREYKDVALQHQLADSGGMQLVRWPKQFDVIVTDNLFGDMLSDIAAMLTGSLGMLPSASLGDTDPKTEKRRALYEPVHGSAPDIAGQGLANPIAMLASFGMALRYSFDRGDLADKLDAAIAAVLAKGLRTADLKSEGATVVSTSQMGEAIVKELEALHA.

77–90 (GPKWDSVPYEVRPE) is a binding site for NAD(+). Substrate-binding residues include arginine 97, arginine 107, arginine 135, and aspartate 226. Mg(2+) contacts are provided by aspartate 226, aspartate 250, and aspartate 254. 290-302 (GSAPDIAGQGLAN) contacts NAD(+).

The protein belongs to the isocitrate and isopropylmalate dehydrogenases family. LeuB type 1 subfamily. Homodimer. It depends on Mg(2+) as a cofactor. Mn(2+) is required as a cofactor.

It is found in the cytoplasm. The enzyme catalyses (2R,3S)-3-isopropylmalate + NAD(+) = 4-methyl-2-oxopentanoate + CO2 + NADH. It participates in amino-acid biosynthesis; L-leucine biosynthesis; L-leucine from 3-methyl-2-oxobutanoate: step 3/4. Its function is as follows. Catalyzes the oxidation of 3-carboxy-2-hydroxy-4-methylpentanoate (3-isopropylmalate) to 3-carboxy-4-methyl-2-oxopentanoate. The product decarboxylates to 4-methyl-2 oxopentanoate. This Nitrobacter winogradskyi (strain ATCC 25391 / DSM 10237 / CIP 104748 / NCIMB 11846 / Nb-255) protein is 3-isopropylmalate dehydrogenase.